A 132-amino-acid chain; its full sequence is Histone H2B.1 (132 aa).

Residues 1–13 (MSAKASKAPASKA) show a composition bias toward low complexity. The tract at residues 1–39 (MSAKASKAPASKAPAEKKPAAKKTSSSTDPSKKRTKARK) is disordered. Lys7 is modified (N6-acetyllysine; alternate). Residue Lys7 forms a Glycyl lysine isopeptide (Lys-Gly) (interchain with G-Cter in SUMO); alternate linkage. Residue Ser11 is modified to Phosphoserine. Lys12 bears the N6-acetyllysine mark. Lys17 carries the post-translational modification N6-acetyllysine; alternate. A Glycyl lysine isopeptide (Lys-Gly) (interchain with G-Cter in SUMO); alternate cross-link involves residue Lys17. Lys18 is covalently cross-linked (Glycyl lysine isopeptide (Lys-Gly) (interchain with G-Cter in SUMO)). Residue Lys125 forms a Glycyl lysine isopeptide (Lys-Gly) (interchain with G-Cter in ubiquitin) linkage.

This sequence belongs to the histone H2B family. In terms of assembly, the nucleosome is a histone octamer containing two molecules each of H2A, H2B, H3 and H4 assembled in one H3-H4 heterotetramer and two H2A-H2B heterodimers. The octamer wraps approximately 147 bp of DNA. Monoubiquitinated by the UBC2-BRE1 complex to form H2BK123ub1. H2BK123ub1 gives a specific tag for epigenetic transcriptional activation and is also prerequisite for H3K4me and H3K79me formation. H2BK123ub1 also modulates the formation of double-strand breaks during meiosis and is a prerequisite for DNA-damage checkpoint activation. In terms of processing, phosphorylated by STE20 to form H2BS10ph during progression through meiotic prophase. May be correlated with chromosome condensation. Post-translationally, acetylated by GCN5 to form H2BK11ac and H2BK16ac. H2BK16ac can also be formed by ESA1. Acetylation of N-terminal lysines and particularly formation of H2BK11acK16ac has a positive effect on transcription. Sumoylation to form H2BK6su and probably also H2BK16su or H2BK17su, occurs preferentially near the telomeres and represses gene transcription.

Its subcellular location is the nucleus. It localises to the chromosome. Functionally, core component of nucleosome. Nucleosomes wrap and compact DNA into chromatin, limiting DNA accessibility to the cellular machineries which require DNA as a template. Histones thereby play a central role in transcription regulation, DNA repair, DNA replication and chromosomal stability. DNA accessibility is regulated via a complex set of post-translational modifications of histones, also called histone code, and nucleosome remodeling. The chain is Histone H2B.1 (HTB1) from Kluyveromyces lactis (strain ATCC 8585 / CBS 2359 / DSM 70799 / NBRC 1267 / NRRL Y-1140 / WM37) (Yeast).